The chain runs to 281 residues: Peptidyl-prolyl cis-trans isomerase CYP28, chloroplastic (281 aa).

The transit peptide at 1 to 24 (MASSSILIPPILTRRNLLLSTTIA) directs the protein to the chloroplast. The 203-residue stretch at 66–268 (STTPCSDSTP…KTVFISGCGE (203 aa)) folds into the PPIase cyclophilin-type domain.

It belongs to the cyclophilin-type PPIase family. In terms of processing, S-nytrosylated during the hypersensitive disease resistance response. As to expression, ubiquitous. Not detected in roots.

It localises to the plastid. It is found in the chloroplast. The enzyme catalyses [protein]-peptidylproline (omega=180) = [protein]-peptidylproline (omega=0). Functionally, PPIases accelerate the folding of proteins. It catalyzes the cis-trans isomerization of proline imidic peptide bonds in oligopeptides. The polypeptide is Peptidyl-prolyl cis-trans isomerase CYP28, chloroplastic (CYP28) (Arabidopsis thaliana (Mouse-ear cress)).